We begin with the raw amino-acid sequence, 54 residues long: LAAVDCSEHPKPACTLEDRPLCGSDNKIYSNKCDFCNAVLESNGTLTLSHFGKC.

The Kazal-like domain maps to 4–54; the sequence is VDCSEHPKPACTLEDRPLCGSDNKIYSNKCDFCNAVLESNGTLTLSHFGKC. Disulfide bonds link cysteine 6-cysteine 36, cysteine 14-cysteine 33, and cysteine 22-cysteine 54. Asparagine 43 carries N-linked (GlcNAc...) asparagine glycosylation.

It is found in the secreted. The protein is Ovomucoid of Argusianus argus (Great argus).